A 231-amino-acid chain; its full sequence is Adenosylcobinamide-GDP ribazoletransferase (231 aa).

Transmembrane regions (helical) follow at residues 24 to 44 (LWAF…ILYL), 46 to 66 (LPLS…LLHL), 96 to 116 (IAGL…LQLL), 159 to 176 (LALG…VVLF), 181 to 198 (LAGI…RISL), and 209 to 229 (LGAT…LVWW).

This sequence belongs to the CobS family. Requires Mg(2+) as cofactor.

The protein resides in the cell membrane. It catalyses the reaction alpha-ribazole + adenosylcob(III)inamide-GDP = adenosylcob(III)alamin + GMP + H(+). The catalysed reaction is alpha-ribazole 5'-phosphate + adenosylcob(III)inamide-GDP = adenosylcob(III)alamin 5'-phosphate + GMP + H(+). It functions in the pathway cofactor biosynthesis; adenosylcobalamin biosynthesis; adenosylcobalamin from cob(II)yrinate a,c-diamide: step 7/7. Functionally, joins adenosylcobinamide-GDP and alpha-ribazole to generate adenosylcobalamin (Ado-cobalamin). Also synthesizes adenosylcobalamin 5'-phosphate from adenosylcobinamide-GDP and alpha-ribazole 5'-phosphate. The protein is Adenosylcobinamide-GDP ribazoletransferase of Thermococcus kodakarensis (strain ATCC BAA-918 / JCM 12380 / KOD1) (Pyrococcus kodakaraensis (strain KOD1)).